The sequence spans 352 residues: Dysbindin (352 aa).

Serine 11 is subject to Phosphoserine. A coiled-coil region spans residues 92 to 180; that stretch reads TSLAELQEQL…AELDTEHAQK (89 aa). A Nuclear export signal motif is present at residues 243–256; sequence LMDLSDQEALDVFL. Residues 267 to 352 are disordered; the sequence is SPGLEMESNP…SDQCDSTQDI (86 aa). Polar residues predominate over residues 274–285; that stretch reads SNPSQNEMNLQI. A compositionally biased stretch (low complexity) spans 286–301; the sequence is PNPSESASQPPASPSA. A phosphoserine mark is found at serine 340 and serine 343.

This sequence belongs to the dysbindin family. Interacts (via its coiled coil domain) with KXD1. Interacts with AP3B2, TRIM32, CMYA5, PI4K2 and RNF151. Interacts with the DNA-dependent protein kinase complex DNA-PK; the interaction phosphorylates DTNBP1 in vitro. Interacts directly in this complex with XRCC5 and XRCC6. Interacts with XPO1; the interaction exports DTNBP1 out of the nucleus. Component of the biogenesis of lysosome-related organelles complex 1 (BLOC-1) composed of at least BLOC1S1, BLOC1S2, BLOC1S3, BLOC1S4, BLOC1S5, BLOC1S6, DTNBP1/BLOC1S7 and SNAPIN/BLOC1S8. Interacts directly in the complex with BLOC1S5, BLOC1S6 and SNAPIN/BLOC1S8. The BLOC-1 complex associates with the AP-3 protein complex and membrane protein cargos. This BLOC-1 complex also associates with the BLOC-2 complex in endosomes. Binds to DTNA and DTNB but may not be a physiological binding partner. Interacts with AP3M1. In terms of processing, ubiquitinated by TRIM32. Ubiquitination leads to DTNBP1 degradation. As to expression, detected in hippocampus neurons (at protein level). Ubiquitously expressed. The highest expression is observed in testis, liver, kidney, brain, heart and lung. In the brain, found primarily in axon bundles and axon terminals, notably in the cerebellum and hippocampus. Expressed at lower levels in stomach, small intestine and skeletal muscle, where it is detected at the sarcolemma.

The protein localises to the cytoplasm. The protein resides in the cytoplasmic vesicle membrane. It localises to the cytoplasmic vesicle. Its subcellular location is the secretory vesicle. It is found in the synaptic vesicle membrane. The protein localises to the endosome membrane. The protein resides in the melanosome membrane. It localises to the nucleus. Its subcellular location is the postsynaptic density. It is found in the presynaptic cell membrane. The protein localises to the endoplasmic reticulum. Component of the BLOC-1 complex, a complex that is required for normal biogenesis of lysosome-related organelles (LRO), such as platelet dense granules and melanosomes. In concert with the AP-3 complex, the BLOC-1 complex is required to target membrane protein cargos into vesicles assembled at cell bodies for delivery into neurites and nerve terminals. The BLOC-1 complex, in association with SNARE proteins, is also proposed to be involved in neurite extension. Associates with the BLOC-2 complex to facilitate the transport of TYRP1 independent of AP-3 function. Plays a role in synaptic vesicle trafficking and in neurotransmitter release. Plays a role in the regulation of cell surface exposure of DRD2. May play a role in actin cytoskeleton reorganization and neurite outgrowth. May modulate MAPK8 phosphorylation. Appears to promote neuronal transmission and viability through regulating the expression of SNAP25 and SYN1, modulating PI3-kinase-Akt signaling and influencing glutamatergic release. Regulates the expression of SYN1 through binding to its promoter. Modulates prefrontal cortical activity via the dopamine/D2 pathway. In Rattus norvegicus (Rat), this protein is Dysbindin (Dtnbp1).